Consider the following 107-residue polypeptide: Integration host factor subunit beta (107 aa).

The segment covering 82 to 101 (PGKELRERVDRRAGEPLKAE) has biased composition (basic and acidic residues). Residues 82 to 107 (PGKELRERVDRRAGEPLKAEEPDDDL) are disordered.

Belongs to the bacterial histone-like protein family. As to quaternary structure, heterodimer of an alpha and a beta chain.

In terms of biological role, this protein is one of the two subunits of integration host factor, a specific DNA-binding protein that functions in genetic recombination as well as in transcriptional and translational control. This chain is Integration host factor subunit beta, found in Paraburkholderia phytofirmans (strain DSM 17436 / LMG 22146 / PsJN) (Burkholderia phytofirmans).